The following is a 188-amino-acid chain: Elongation factor P (188 aa).

Belongs to the elongation factor P family.

It localises to the cytoplasm. The protein operates within protein biosynthesis; polypeptide chain elongation. Its function is as follows. Involved in peptide bond synthesis. Stimulates efficient translation and peptide-bond synthesis on native or reconstituted 70S ribosomes in vitro. Probably functions indirectly by altering the affinity of the ribosome for aminoacyl-tRNA, thus increasing their reactivity as acceptors for peptidyl transferase. This chain is Elongation factor P, found in Methylorubrum extorquens (strain CM4 / NCIMB 13688) (Methylobacterium extorquens).